The sequence spans 173 residues: MARMNRPAPVEVTYKNMRFLITHNPTNATLNKFIEELKKYGVTTIVRVCEATYDTTLVEKEGIHVLDWPFDDGAPPSNQIVDDWLSLVKIKFREEPGCCIAVHCVAGLGRAPVLVALALIEGGMKYEDAVQFIRQKRRGAFNSKQLLYLEKYRPKMRLRFKDSNGHRNNCCIQ.

Residues 8-161 (APVEVTYKNM…YRPKMRLRFK (154 aa)) form the Tyrosine-protein phosphatase domain. Cys49 and Cys104 are joined by a disulfide. The Proton donor role is filled by Asp72. Positions 97 to 132 (GCCIAVHCVAGLGRAPVLVALALIEGGMKYEDAVQF) are interaction with ATF5. Residue Cys104 is the Phosphocysteine intermediate of the active site. 105–110 (VAGLGR) contacts phosphate. Substrate is bound at residue Arg110. Cys170 is modified (cysteine methyl ester). The S-farnesyl cysteine moiety is linked to residue Cys170. A propeptide spans 171 to 173 (CIQ) (removed in mature form).

The protein belongs to the protein-tyrosine phosphatase family. Homotrimer. Interacts with ATF5. Interacts with tubulin. Post-translationally, farnesylated. Farnesylation is required for membrane targeting. Unfarnesylated forms are shifted into the nucleus. Expressed in bone marrow, lymph nodes, T lymphocytes, spleen, thymus and tonsil. Overexpressed in tumor cell lines.

The protein resides in the cell membrane. It localises to the early endosome. It is found in the endoplasmic reticulum. Its subcellular location is the cytoplasm. The protein localises to the cytoskeleton. The protein resides in the spindle. It localises to the nucleus. The catalysed reaction is O-phospho-L-tyrosyl-[protein] + H2O = L-tyrosyl-[protein] + phosphate. With respect to regulation, inhibited by sodium orthovanadate and pentamidine. Functionally, protein tyrosine phosphatase which stimulates progression from G1 into S phase during mitosis. May play a role in the development and maintenance of differentiating epithelial tissues. Enhances cell proliferation, cell motility and invasive activity, and promotes cancer metastasis. This Homo sapiens (Human) protein is Protein tyrosine phosphatase type IVA 1 (PTP4A1).